Reading from the N-terminus, the 375-residue chain is MKLTKTALCTALFATFTFSANAQTYPDLPVGIKGGTGALIGDTVYVGLGSGGDKFYTLDLKDPSAQWKEIATFPGGERNQPVAAAVDGKLYVFGGLQKNEKGELQLVNDAYRYNPSDNTWMKLPTRSPRGLVGSSGASHGDKVYILGGSNLSIFNGFFQDNVAAGEDQAKKDEIAAAYFDQRPEDYFFTTELLSYEPSTNKWRNEGRIPFSGRAGAAFTIQGNDLVVVNGEIKPGLRTAETHQGKFTAKGVQWKNLPDLPAPKGKSQDGLAGALSGYSNGHYLVTGGANFPGSIKQYKEGKLHAHKGLSKAWHNEVYTLNNGKWRIVGELPMNIGYGFSVSYNNKVLLIGGETDGGKALTSVKAISYDGKKLTIE.

The first 22 residues, 1 to 22, serve as a signal peptide directing secretion; that stretch reads MKLTKTALCTALFATFTFSANA. Kelch repeat units lie at residues 43 to 87, 89 to 140, 142 to 176, 177 to 222, 225 to 273, 295 to 344, and 346 to 375; these read TVYV…AAVD, KLYV…ASHG, KVYILGGSNLSIFNGFFQDNVAAGEDQAKKDEIAA, AYFD…TIQG, LVVV…LAGA, KQYK…SYNN, and VLLIGGETDGGKALTSVKAISYDGKKLTIE. E231 acts as the Proton acceptor in catalysis.

Belongs to the NanM family. Homodimer.

It localises to the periplasm. It carries out the reaction N-acetyl-alpha-neuraminate = N-acetyl-beta-neuraminate. Converts alpha-N-acetylneuranimic acid (Neu5Ac) to the beta-anomer, accelerating the equilibrium between the alpha- and beta-anomers. Probably facilitates sialidase-negative bacteria to compete successfully for limited amounts of extracellular Neu5Ac, which is likely taken up in the beta-anomer. In addition, the rapid removal of sialic acid from solution might be advantageous to the bacterium to damp down host responses. The protein is N-acetylneuraminate epimerase of Haemophilus influenzae (strain PittEE).